A 528-amino-acid polypeptide reads, in one-letter code: Protein BFR2 (528 aa).

Disordered stretches follow at residues 14–158 (NKSK…ADAK) and 372–401 (DSNS…NNAI). Residues 132 to 146 (DSGDSDSDSGSDAGE) are compositionally biased toward acidic residues.

This sequence belongs to the AATF family.

The protein localises to the nucleus. The protein resides in the nucleolus. This chain is Protein BFR2 (BFR2), found in Eremothecium gossypii (strain ATCC 10895 / CBS 109.51 / FGSC 9923 / NRRL Y-1056) (Yeast).